The following is a 279-amino-acid chain: MSDSAYNPGQDGAKMGFADAMSYGDYLHLDALLDQQHCKSDAHDEMLFIIQHQTSELWMKLALHELQAAREALQQGQTAEMFKMLARVSRIFEQLNSAWDVLRTMTPADYTRFREALGPSSGFQSYQYRLIEYVLGNRNPNMLRPHEHVPEVHALLSAELARPSFYDEVNRYLFQTLDGHTENLPAPRLDAPHALDETIQERWLKVYGDIDTYWTLYELAEKLVDLEDYFRRWRFNHVTTVERVIGFKRGTGGTSGVQYLRRMLSVELFPELWTLRGDL.

Substrate-binding positions include 48–52 (FIIQH), Y110, and R114. H237 lines the heme pocket. T251 is a binding site for substrate.

This sequence belongs to the tryptophan 2,3-dioxygenase family. In terms of assembly, homotetramer. Heme is required as a cofactor.

It carries out the reaction L-tryptophan + O2 = N-formyl-L-kynurenine. It functions in the pathway amino-acid degradation; L-tryptophan degradation via kynurenine pathway; L-kynurenine from L-tryptophan: step 1/2. In terms of biological role, heme-dependent dioxygenase that catalyzes the oxidative cleavage of the L-tryptophan (L-Trp) pyrrole ring and converts L-tryptophan to N-formyl-L-kynurenine. Catalyzes the oxidative cleavage of the indole moiety. This chain is Tryptophan 2,3-dioxygenase, found in Ruegeria sp. (strain TM1040) (Silicibacter sp.).